The chain runs to 128 residues: Small ribosomal subunit protein uS13 (128 aa).

The interval 85 to 128 (GSYRGLRHRRSLPVRGQRTHTNARTRKGPRRGTVANKKKATGKT) is disordered. Residues 89–128 (GLRHRRSLPVRGQRTHTNARTRKGPRRGTVANKKKATGKT) show a composition bias toward basic residues.

It belongs to the universal ribosomal protein uS13 family. As to quaternary structure, part of the 30S ribosomal subunit. Forms a loose heterodimer with protein S19. Forms two bridges to the 50S subunit in the 70S ribosome.

In terms of biological role, located at the top of the head of the 30S subunit, it contacts several helices of the 16S rRNA. In the 70S ribosome it contacts the 23S rRNA (bridge B1a) and protein L5 of the 50S subunit (bridge B1b), connecting the 2 subunits; these bridges are implicated in subunit movement. Contacts the tRNAs in the A and P-sites. The polypeptide is Small ribosomal subunit protein uS13 (Solibacter usitatus (strain Ellin6076)).